The primary structure comprises 235 residues: Orotidine 5'-phosphate decarboxylase (235 aa).

Substrate-binding positions include Asp-16, Lys-38, 65–74 (DLKLHDIGNT), Thr-120, Arg-181, Gln-190, Gly-210, and Arg-211. The active-site Proton donor is the Lys-67.

This sequence belongs to the OMP decarboxylase family. Type 1 subfamily. In terms of assembly, homodimer.

It catalyses the reaction orotidine 5'-phosphate + H(+) = UMP + CO2. It participates in pyrimidine metabolism; UMP biosynthesis via de novo pathway; UMP from orotate: step 2/2. Catalyzes the decarboxylation of orotidine 5'-monophosphate (OMP) to uridine 5'-monophosphate (UMP). The protein is Orotidine 5'-phosphate decarboxylase of Rhodopseudomonas palustris (strain BisA53).